Here is a 221-residue protein sequence, read N- to C-terminus: uncharacterized protein (221 aa).

An N-terminal signal peptide occupies residues 1-23 (MNKLIQLALFFTLMLTGCSNSST). The tract at residues 67–221 (ELGKRKAKEE…QGYIDPEDAP (155 aa)) is disordered. The segment covering 68–150 (LGKRKAKEEA…EQKANAEKKR (83 aa)) has biased composition (basic and acidic residues). Residues 70 to 161 (KRKAKEEAEK…SQAQRQQTEA (92 aa)) are a coiled coil. The span at 152–161 (SQAQRQQTEA) shows a compositional bias: polar residues. Low complexity predominate over residues 162 to 174 (PSSNSQDPPSSSS). Over residues 175-184 (QTDKTIQQPA) the composition is skewed to polar residues. The segment covering 195–205 (YEERKKWHDDQ) has biased composition (basic and acidic residues).

This is an uncharacterized protein from Bacillus subtilis (strain 168).